A 288-amino-acid polypeptide reads, in one-letter code: Cyclin-dependent kinase 2 homolog (288 aa).

A Protein kinase domain is found at 4–284 (YHGLEKIGEG…AKQALEHAYF (281 aa)). ATP-binding positions include 10–18 (IGEGTYGVV) and Lys-32. Thr-14 bears the Phosphothreonine mark. Tyr-15 bears the Phosphotyrosine mark. Asp-125 (proton acceptor) is an active-site residue. A Phosphothreonine modification is found at Thr-158.

The protein belongs to the protein kinase superfamily. CMGC Ser/Thr protein kinase family. CDC2/CDKX subfamily. May form a complex composed of at least the catalytic subunit CRK2 and a cyclin. Mg(2+) is required as a cofactor.

It localises to the cytoplasm. The catalysed reaction is L-seryl-[protein] + ATP = O-phospho-L-seryl-[protein] + ADP + H(+). It catalyses the reaction L-threonyl-[protein] + ATP = O-phospho-L-threonyl-[protein] + ADP + H(+). It carries out the reaction [DNA-directed RNA polymerase] + ATP = phospho-[DNA-directed RNA polymerase] + ADP + H(+). Its activity is regulated as follows. Phosphorylation at Thr-14 or Tyr-15 inactivates the enzyme, while phosphorylation at Thr-158 activates it. Functionally, serine/threonine-protein kinase. Involved in the control of the cell cycle. Required for entry into S-phase and mitosis. Probable component of the kinase complex that phosphorylates the repetitive C-terminus of RNA polymerase II. The protein is Cyclin-dependent kinase 2 homolog of Plasmodium vivax.